Reading from the N-terminus, the 147-residue chain is 3-dehydroquinate dehydratase (147 aa).

Catalysis depends on Y25, which acts as the Proton acceptor. 3 residues coordinate substrate: N76, H82, and D89. Catalysis depends on H102, which acts as the Proton donor. Residues 103 to 104 and R113 contribute to the substrate site; that span reads LS.

It belongs to the type-II 3-dehydroquinase family. As to quaternary structure, homododecamer.

The enzyme catalyses 3-dehydroquinate = 3-dehydroshikimate + H2O. It functions in the pathway metabolic intermediate biosynthesis; chorismate biosynthesis; chorismate from D-erythrose 4-phosphate and phosphoenolpyruvate: step 3/7. Its function is as follows. Catalyzes a trans-dehydration via an enolate intermediate. This Nostoc sp. (strain PCC 7120 / SAG 25.82 / UTEX 2576) protein is 3-dehydroquinate dehydratase.